Here is a 98-residue protein sequence, read N- to C-terminus: NADH-ubiquinone oxidoreductase chain 4L (98 aa).

The next 3 membrane-spanning stretches (helical) occupy residues 2–22, 29–49, and 61–81; these read PSIF…TLVF, SLLC…LIIL, and ILLL…LVMV.

The protein belongs to the complex I subunit 4L family. Core subunit of respiratory chain NADH dehydrogenase (Complex I) which is composed of 45 different subunits.

The protein resides in the mitochondrion inner membrane. It carries out the reaction a ubiquinone + NADH + 5 H(+)(in) = a ubiquinol + NAD(+) + 4 H(+)(out). Its function is as follows. Core subunit of the mitochondrial membrane respiratory chain NADH dehydrogenase (Complex I) which catalyzes electron transfer from NADH through the respiratory chain, using ubiquinone as an electron acceptor. Part of the enzyme membrane arm which is embedded in the lipid bilayer and involved in proton translocation. In Avahi laniger (Eastern woolly lemur), this protein is NADH-ubiquinone oxidoreductase chain 4L (MT-ND4L).